A 65-amino-acid polypeptide reads, in one-letter code: Large ribosomal subunit protein bL35 (65 aa).

This sequence belongs to the bacterial ribosomal protein bL35 family.

In Pectobacterium atrosepticum (strain SCRI 1043 / ATCC BAA-672) (Erwinia carotovora subsp. atroseptica), this protein is Large ribosomal subunit protein bL35.